The sequence spans 273 residues: Undecaprenyl-diphosphatase (273 aa).

The next 7 helical transmembrane spans lie at 6–26 (SLLI…LPVS), 45–65 (AKTF…VMFW), 90–110 (LTLI…LLFH), 116–136 (LFNP…LIAA), 190–210 (YAAS…ATAL), 222–242 (GDIS…LIAI), and 252–272 (ISFI…YVVF).

It belongs to the UppP family.

The protein localises to the cell inner membrane. The enzyme catalyses di-trans,octa-cis-undecaprenyl diphosphate + H2O = di-trans,octa-cis-undecaprenyl phosphate + phosphate + H(+). In terms of biological role, catalyzes the dephosphorylation of undecaprenyl diphosphate (UPP). Confers resistance to bacitracin. The chain is Undecaprenyl-diphosphatase from Shigella sonnei (strain Ss046).